We begin with the raw amino-acid sequence, 431 residues long: Phosphomethylpyrimidine synthase (431 aa).

Residues Asn-66, Met-95, Tyr-124, His-163, 185-187, 226-229, and Glu-265 contribute to the substrate site; these read SRG and DGLR. His-269 serves as a coordination point for Zn(2+). Position 292 (Tyr-292) interacts with substrate. Residue His-333 participates in Zn(2+) binding. [4Fe-4S] cluster-binding residues include Cys-408, Cys-411, and Cys-415.

It belongs to the ThiC family. It depends on [4Fe-4S] cluster as a cofactor.

It catalyses the reaction 5-amino-1-(5-phospho-beta-D-ribosyl)imidazole + S-adenosyl-L-methionine = 4-amino-2-methyl-5-(phosphooxymethyl)pyrimidine + CO + 5'-deoxyadenosine + formate + L-methionine + 3 H(+). The protein operates within cofactor biosynthesis; thiamine diphosphate biosynthesis. Catalyzes the synthesis of the hydroxymethylpyrimidine phosphate (HMP-P) moiety of thiamine from aminoimidazole ribotide (AIR) in a radical S-adenosyl-L-methionine (SAM)-dependent reaction. This Dehalococcoides mccartyi (strain ATCC BAA-2100 / JCM 16839 / KCTC 5957 / BAV1) protein is Phosphomethylpyrimidine synthase.